Here is a 140-residue protein sequence, read N- to C-terminus: ATP synthase epsilon chain (140 aa).

The protein belongs to the ATPase epsilon chain family. As to quaternary structure, F-type ATPases have 2 components, CF(1) - the catalytic core - and CF(0) - the membrane proton channel. CF(1) has five subunits: alpha(3), beta(3), gamma(1), delta(1), epsilon(1). CF(0) has three main subunits: a, b and c.

It localises to the cell inner membrane. Functionally, produces ATP from ADP in the presence of a proton gradient across the membrane. In Saccharophagus degradans (strain 2-40 / ATCC 43961 / DSM 17024), this protein is ATP synthase epsilon chain.